A 339-amino-acid polypeptide reads, in one-letter code: Nucleoid-associated protein Asuc_0779 (339 aa).

Belongs to the YejK family.

It localises to the cytoplasm. The protein resides in the nucleoid. The protein is Nucleoid-associated protein Asuc_0779 of Actinobacillus succinogenes (strain ATCC 55618 / DSM 22257 / CCUG 43843 / 130Z).